A 706-amino-acid polypeptide reads, in one-letter code: K(+)-insensitive pyrophosphate-energized proton pump (706 aa).

Transmembrane regions (helical) follow at residues 1-21 (MTAL…AIWA), 62-82 (IVIF…GFAI), 83-103 (GAIL…RANV), 128-148 (GMLV…FLVY), and 164-184 (VALG…GGIF). Lysine 186 serves as a coordination point for substrate. Mg(2+) is bound by residues aspartate 189, aspartate 193, asparagine 216, and aspartate 219. 6 helical membrane passes run 231–251 (LFET…IFFA), 261–281 (TLPL…TFFV), 298–318 (IATG…LIGF), 328–348 (GMSL…IIWI), 376–398 (IQGL…AGIL), and 412–432 (ATAT…FGPV). A Mg(2+)-binding site is contributed by aspartate 434. The next 4 membrane-spanning stretches (helical) occupy residues 465–485 (AVTK…LFAA), 516–536 (YVVV…AMGM), 585–605 (IIPS…IYAI), and 616–636 (AFSA…FVAI). Residues aspartate 646, aspartate 672, and aspartate 676 each coordinate Ca(2+). Position 679 (lysine 679) interacts with substrate. The helical transmembrane segment at 685–705 (AVNPMIKITNIVALLLLAILA) threads the bilayer.

The protein belongs to the H(+)-translocating pyrophosphatase (TC 3.A.10) family. K(+)-insensitive subfamily. In terms of assembly, homodimer. The cofactor is Mg(2+).

It localises to the cell inner membrane. The enzyme catalyses diphosphate + H2O + H(+)(in) = 2 phosphate + 2 H(+)(out). Proton pump that utilizes the energy of pyrophosphate hydrolysis as the driving force for proton movement across the membrane. Generates a proton motive force. The protein is K(+)-insensitive pyrophosphate-energized proton pump of Bradyrhizobium diazoefficiens (strain JCM 10833 / BCRC 13528 / IAM 13628 / NBRC 14792 / USDA 110).